Consider the following 569-residue polypeptide: Endo-1,4-beta-xylanase 5 (569 aa).

An N-terminal signal peptide occupies residues 1 to 25 (MKNINNGFFLCMLLLLWCFVHSGIS). N-linked (GlcNAc...) asparagine glycosylation is found at asparagine 197, asparagine 261, and asparagine 307. Residues 209 to 500 (EQTKPSFLLG…NTATGDVIDK (292 aa)) form the GH10 domain. Glutamate 332 (proton donor) is an active-site residue. Asparagine 346 carries an N-linked (GlcNAc...) asparagine glycan. The active-site Nucleophile is the glutamate 439. N-linked (GlcNAc...) asparagine glycosylation is found at asparagine 490, asparagine 536, and asparagine 544.

It belongs to the glycosyl hydrolase 10 (cellulase F) family.

It carries out the reaction Endohydrolysis of (1-&gt;4)-beta-D-xylosidic linkages in xylans.. It participates in glycan degradation; xylan degradation. In terms of biological role, binds to and hydrolyzes insoluble and soluble xylan substrates. The sequence is that of Endo-1,4-beta-xylanase 5 from Arabidopsis thaliana (Mouse-ear cress).